The following is a 159-amino-acid chain: Putative 4-hydroxy-4-methyl-2-oxoglutarate aldolase (159 aa).

Substrate is bound by residues 75–78 and Arg97; that span reads GDQL. Residue Asp98 participates in a divalent metal cation binding.

This sequence belongs to the class II aldolase/RraA-like family. Homotrimer. The cofactor is a divalent metal cation.

It carries out the reaction 4-hydroxy-4-methyl-2-oxoglutarate = 2 pyruvate. It catalyses the reaction oxaloacetate + H(+) = pyruvate + CO2. Catalyzes the aldol cleavage of 4-hydroxy-4-methyl-2-oxoglutarate (HMG) into 2 molecules of pyruvate. Also contains a secondary oxaloacetate (OAA) decarboxylase activity due to the common pyruvate enolate transition state formed following C-C bond cleavage in the retro-aldol and decarboxylation reactions. The sequence is that of Putative 4-hydroxy-4-methyl-2-oxoglutarate aldolase from Aromatoleum aromaticum (strain DSM 19018 / LMG 30748 / EbN1) (Azoarcus sp. (strain EbN1)).